The following is a 239-amino-acid chain: U2 small nuclear ribonucleoprotein A' (239 aa).

LRR repeat units follow at residues 19–40 (KETE…GVLR), 42–63 (VHDA…PRMK), 64–85 (RLQT…IGKV), and 88–109 (NLKT…DPLA). Residues 122-160 (NPVAQKQYYRLYLIWRIPSLHILDFERVRRNERLRAEEV) form the LRRCT domain.

The protein belongs to the U2 small nuclear ribonucleoprotein A family. In terms of assembly, belongs to the 40S cdc5-associated complex (or cwf complex), a spliceosome sub-complex reminiscent of a late-stage spliceosome composed of the U2, U5 and U6 snRNAs and at least brr2, cdc5, cwf2/prp3, cwf3/syf1, cwf4/syf3, cwf5/ecm2, spp42/cwf6, cwf7/spf27, cwf8, cwf9, cwf10, cwf11, cwf12, prp45/cwf13, cwf14, cwf15, cwf16, cwf17, cwf18, cwf19, cwf20, cwf21, cwf22, cwf23, cwf24, cwf25, cwf26, cyp7/cwf27, cwf28, cwf29/ist3, lea1, msl1, prp5/cwf1, prp10, prp12/sap130, prp17, prp22, sap61, sap62, sap114, sap145, slu7, smb1, smd1, smd3, smf1, smg1 and syf2.

It is found in the nucleus. Its function is as follows. Involved in pre-mRNA splicing. This protein is associated with sn-RNP U2. It helps the A' protein to bind stem loop IV of U2 snRNA. The sequence is that of U2 small nuclear ribonucleoprotein A' (lea1) from Schizosaccharomyces pombe (strain 972 / ATCC 24843) (Fission yeast).